The primary structure comprises 359 residues: Protein RecA (359 aa).

74 to 81 contributes to the ATP binding site; the sequence is GPESSGKT.

Belongs to the RecA family.

It localises to the cytoplasm. Its function is as follows. Can catalyze the hydrolysis of ATP in the presence of single-stranded DNA, the ATP-dependent uptake of single-stranded DNA by duplex DNA, and the ATP-dependent hybridization of homologous single-stranded DNAs. It interacts with LexA causing its activation and leading to its autocatalytic cleavage. This is Protein RecA from Anaplasma marginale (strain St. Maries).